The chain runs to 334 residues: Formamidase (334 aa).

The region spanning 14–260 is the CN hydrolase domain; sequence FLVAAIQFPV…WEIVTGEIYP (247 aa). Glutamate 60 acts as the Proton acceptor in catalysis. Lysine 133 functions as the Proton donor in the catalytic mechanism. Cysteine 166 serves as the catalytic Nucleophile.

The protein belongs to the carbon-nitrogen hydrolase superfamily. Aliphatic amidase family.

The enzyme catalyses formamide + H2O = formate + NH4(+). Functionally, is an aliphatic amidase with a restricted substrate specificity, as it only hydrolyzes formamide. This Helicobacter pylori (strain G27) protein is Formamidase.